We begin with the raw amino-acid sequence, 751 residues long: Phosphate transporter PHO1 homolog 8 (751 aa).

The 299-residue stretch at 1–299 (MKFGKEYVAQ…LRNAAKLYME (299 aa)) folds into the SPX domain. The Cytoplasmic portion of the chain corresponds to 1–351 (MKFGKEYVAQ…KVTKEKHRIT (351 aa)). The chain crosses the membrane as a helical span at residues 352–372 (FSTGFFVGCTVSLVIALGLFI). Residues 373–392 (HARNIMGAVGHKLYMETMFP) are Extracellular-facing. A helical transmembrane segment spans residues 393 to 413 (LYSLFAFVVLHMIMYASNIYF). The Cytoplasmic segment spans residues 414–434 (WKRYRVNYPFIFGFKEGTELG). The chain crosses the membrane as a helical span at residues 435 to 455 (YGHVLLLSFGLGTLALCAVLV). At 456-473 (NMDMEMDPNTNDYKTITE) the chain is on the extracellular side. Residues 474-494 (LVPLFVVALVIAISVCPFNIF) traverse the membrane as a helical segment. Residues 495-623 (YRSSRFFFLM…FSINRGNDWK (129 aa)) are Cytoplasmic-facing. In terms of domain architecture, EXS spans 558–751 (KSSDVYSTFY…NYDEEEDRDS (194 aa)). Residues 624–644 (IAAWVFSGLATFYGTYWDIVY) form a helical membrane-spanning segment. Residues 645-667 (DWGLLHRPSKSWLREKLLVPHKS) are Extracellular-facing. Residues 668–688 (VYYVAMVVNVVLRLAWLQTVL) form a helical membrane-spanning segment. Over 689-751 (DFNISFLHRE…NYDEEEDRDS (63 aa)) the chain is Cytoplasmic.

Belongs to the SYG1 (TC 2.A.94) family. As to expression, expressed in root epidermis, leaf hydathodes, trichomes and petioles, stem vascular cylinder, receptacle, stigma apex and pollen grains.

It localises to the cell membrane. In terms of biological role, may transport inorganic phosphate (Pi). The polypeptide is Phosphate transporter PHO1 homolog 8 (PHO1-H8) (Arabidopsis thaliana (Mouse-ear cress)).